We begin with the raw amino-acid sequence, 156 residues long: Small ribosomal subunit protein uS7 (156 aa).

The protein belongs to the universal ribosomal protein uS7 family. As to quaternary structure, part of the 30S ribosomal subunit. Contacts proteins S9 and S11.

One of the primary rRNA binding proteins, it binds directly to 16S rRNA where it nucleates assembly of the head domain of the 30S subunit. Is located at the subunit interface close to the decoding center, probably blocks exit of the E-site tRNA. This Yersinia enterocolitica serotype O:8 / biotype 1B (strain NCTC 13174 / 8081) protein is Small ribosomal subunit protein uS7.